A 287-amino-acid polypeptide reads, in one-letter code: PAK4-inhibitor INKA1 (287 aa).

Disordered stretches follow at residues 22 to 59 and 138 to 157; these read GRDTGSPSMPGPLQPTSQTGPDVQPSHQLRASGALEED and SRAPVASVPPVHHPRPKSTP. Residues 35–50 show a composition bias toward polar residues; sequence QPTSQTGPDVQPSHQL. Positions 138–147 are enriched in low complexity; the sequence is SRAPVASVPP. Inka box regions lie at residues 168 to 205 and 261 to 287; these read EAEDWTAALLNRGRSRQPLVLGDNCFADLVHNWMELPE and PADVSRFAALMSCRSRQPIICNDVSYL.

This sequence belongs to the INKA family. As to quaternary structure, interacts with PAK4.

Its subcellular location is the nucleus. The protein resides in the cytoplasm. In terms of biological role, inhibitor of the serine/threonine-protein kinase PAK4. Acts by binding PAK4 in a substrate-like manner, inhibiting the protein kinase activity. The chain is PAK4-inhibitor INKA1 from Homo sapiens (Human).